The primary structure comprises 170 residues: Adenine phosphoribosyltransferase (170 aa).

Belongs to the purine/pyrimidine phosphoribosyltransferase family. As to quaternary structure, homodimer.

The protein resides in the cytoplasm. It carries out the reaction AMP + diphosphate = 5-phospho-alpha-D-ribose 1-diphosphate + adenine. It participates in purine metabolism; AMP biosynthesis via salvage pathway; AMP from adenine: step 1/1. Catalyzes a salvage reaction resulting in the formation of AMP, that is energically less costly than de novo synthesis. The protein is Adenine phosphoribosyltransferase of Streptococcus suis (strain 98HAH33).